The sequence spans 140 residues: Small ribosomal subunit protein uS12 (140 aa).

Residues 33-55 (KEQTNVSSPQKRGVCTRVGTMTP) form a disordered region.

This sequence belongs to the universal ribosomal protein uS12 family. In terms of assembly, part of the 30S ribosomal subunit. Contacts proteins S8 and S17. May interact with IF1 in the 30S initiation complex.

Functionally, with S4 and S5 plays an important role in translational accuracy. In terms of biological role, interacts with and stabilizes bases of the 16S rRNA that are involved in tRNA selection in the A site and with the mRNA backbone. Located at the interface of the 30S and 50S subunits, it traverses the body of the 30S subunit contacting proteins on the other side and probably holding the rRNA structure together. The combined cluster of proteins S8, S12 and S17 appears to hold together the shoulder and platform of the 30S subunit. This Geobacillus kaustophilus (strain HTA426) protein is Small ribosomal subunit protein uS12.